The chain runs to 378 residues: MAHKAPSVITCKAAVVWELGGPVVLEEIKVDPPKASEVRIKMLCASICHTDVLCTKGFPIPLFPRIPGHEGVGVIESVGIDAKGLKPGDIVMPLYLGECGQCLNCKTGKTNLCHVYPPPFSGLMNDGTSRMTIARTGESIYHFTSCSTWTEYAVADCNYVLKIDPKISYPHASFLSCGFTTGFGATWRETQVSKGSSVAVFGIGTVGLGVIKGAQLAGASKIIGVDVNQYKAAKGKVFGMTDFINPKDHPNKTVSELVKEITHGLGVDYCFECTGVPSLLNEALEASKFGIGTVVPIGAGGEASVAINSLILFSGRTLKCTTFGGVRTQSDLPVIIDKCLNKEIQLDELLTHEIQLENIQAAFEILKKPDCVKILINF.

Cys48 lines the Zn(2+) pocket. 49–53 is an NAD(+) binding site; sequence HTDVL. Positions 69, 99, 102, 105, 113, and 177 each coordinate Zn(2+). Residues 202-207, Asp226, Lys231, 274-276, 297-299, and 321-323 contribute to the NAD(+) site; these read GIGTVG, TGV, IGA, and TTF.

Belongs to the zinc-containing alcohol dehydrogenase family. Class-IV subfamily. In terms of assembly, homodimer. The cofactor is Zn(2+). In terms of tissue distribution, expressed in flowers and disk florets.

Its pathway is isoprenoid biosynthesis. The chain is Alcohol dehydrogenase 1 from Tanacetum cinerariifolium (Dalmatian daisy).